Consider the following 347-residue polypeptide: S-adenosylmethionine:tRNA ribosyltransferase-isomerase (347 aa).

The protein belongs to the QueA family. In terms of assembly, monomer.

It is found in the cytoplasm. It carries out the reaction 7-aminomethyl-7-carbaguanosine(34) in tRNA + S-adenosyl-L-methionine = epoxyqueuosine(34) in tRNA + adenine + L-methionine + 2 H(+). Its pathway is tRNA modification; tRNA-queuosine biosynthesis. Transfers and isomerizes the ribose moiety from AdoMet to the 7-aminomethyl group of 7-deazaguanine (preQ1-tRNA) to give epoxyqueuosine (oQ-tRNA). The chain is S-adenosylmethionine:tRNA ribosyltransferase-isomerase from Xylella fastidiosa (strain M23).